We begin with the raw amino-acid sequence, 2737 residues long: Non-reducing polyketide synthase ATEG_07661 (2737 aa).

The tract at residues 75–245 (SRSLAELDSW…VRYDQTRATV (171 aa)) is N-terminal acylcarrier protein transacylase domain (SAT). Catalysis depends on Cys-154, which acts as the Nucleophile; for transacylase activity. His-276 functions as the Proton donor/acceptor; for transacylase activity in the catalytic mechanism. The region spanning 427–854 (NEAIAIVGMS…GSNASMIITE (428 aa)) is the Ketosynthase family 3 (KS3) domain. Catalysis depends on for beta-ketoacyl synthase activity residues Cys-603, His-738, and His-777. The malonyl-CoA:ACP transacylase (MAT) stretch occupies residues 969 to 1260 (FGGQVSRFVG…IMASRAIAQS (292 aa)). The segment at 1368 to 1503 (LQSLWNFVEF…ASVEMRAPTD (136 aa)) is N-terminal hotdog fold. In terms of domain architecture, PKS/mFAS DH spans 1368 to 1683 (LQSLWNFVEF…YGRVAKASMS (316 aa)). The segment at 1399 to 1681 (FVLSHVIAQT…VQYGRVAKAS (283 aa)) is product template (PT) domain. The active-site Proton acceptor; for dehydratase activity is the His-1403. Residues 1535 to 1683 (VEVLQGRNVY…YGRVAKASMS (149 aa)) are C-terminal hotdog fold. The Proton donor; for dehydratase activity role is filled by Asp-1592. Positions 1724–1747 (SRTTKKKAKASKSKSSVKKDKAPS) are disordered. A compositionally biased stretch (basic residues) spans 1725–1739 (RTTKKKAKASKSKSS). The 75-residue stretch at 1750–1824 (RDITDEVRNL…KFVACVSNAL (75 aa)) folds into the Carrier domain. Ser-1784 bears the O-(pantetheine 4'-phosphoryl)serine mark. The tract at residues 1827–1876 (PNQGQSSIDEDDEDDEHSEDSSNESSSAASDEDASSGLESPDTGILTPED) is disordered. Over residues 1834–1848 (IDEDDEDDEHSEDSS) the composition is skewed to acidic residues. Residues 1849 to 1866 (NESSSAASDEDASSGLES) show a composition bias toward low complexity. The interval 2094 to 2270 (ADRIQSSSGS…GFGHVDWTDG (177 aa)) is methyltransferase domain. The NADPH-binding domain stretch occupies residues 2362–2665 (VVLVTGATGS…IPFKDWISRV (304 aa)).

Its pathway is secondary metabolite biosynthesis. Its function is as follows. Non-reducing polyketide synthase; part of the cluster B that mediates the biosynthesis of azasperpyranones, members of the azaphilone family that exhibit anti-cancer activities. Azasperpyranones are synthesized by 2 clusters, A and B. Cluster A is responsible for the production of the polyhydric phenol moiety while the azaphilonoid scaffold is produced by the cluster B. The non-reducing polyketide synthase ATEG_03629 produces 5-methyl orsellinic acid, which is then reduced to 5-methyl orsellinic aldehyde by the NRPS-like protein ATEG_03630. 5-methyl orsellinic aldehyde is then first hydroxylated by the FAD-dependent monooxygenase ATEG_03635 and subsequently hydroxylated by the cytochrome P450 monooxygenase ATEG_03631 to produce the unstable polyhydric phenol precursor of azasperpyranones. On the other hand, the polyketide synthase ATEG_07659 is responsible for producing the 3,5-dimethyloctadienone moiety from acetyl-CoA, three malonyl-CoA, and two S-adenosyl methionines (SAM). The 3,5-dimethyloctadienone moiety is then loaded onto the SAT domain of ATEG_07661 and extended with four malonyl-CoA and one SAM, which leads to the formation of 2,4-dihydroxy-6-(5,7-dimethyl-2-oxo-trans-3-trans-5-nonadienyl)-3-methylbenzaldehyde (compound 8) after reductive release and aldol condensation. The FAD-dependent monooxygenase ATEG_07662 is the next enzyme in the biosynthesis sequence and hydroxylates the side chain at the benzylic position of compound 8. In Aspergillus nidulans, afoF, the ortholog of the FAD-dependent oxygenase ATEG_07660, is the key enzyme for the biosynthesis of asperfuranone by catalyzing the hydroxylation at C-8 of to prevent the formation of a six-membered ring hemiacetal intermediate and thus facilitating the formation of a five-membered ring to produce asperfuranone. In Aspergillus terreus, ATEG_07660 is probably not functional, which leads to the formation of the six-membered ring hemiacetal intermediate presperpyranone instead of asperfuranone. Finally, ATEG_03636 is involved in the condensation of the polyhydric phenol moiety produced by cluster A and the perasperpyranone precursor produced by cluster B, to yield azasperpyranone A. Further modifications of azasperpyranone A result in the production of derivatives, including azasperpyranone B to F. The polypeptide is Non-reducing polyketide synthase ATEG_07661 (Aspergillus terreus (strain NIH 2624 / FGSC A1156)).